The sequence spans 553 residues: Tether containing UBX domain for GLUT4 (553 aa).

At Ala-2 the chain carries N-acetylalanine. Over residues 182–202 (PGSLGSSASAGQAAASAPLPL) the composition is skewed to low complexity. Residues 182 to 324 (PGSLGSSASA…REPVDREPVV (143 aa)) are disordered. Ser-184 bears the Phosphoserine mark. Positions 206-217 (ELSRGDLSRPED) are enriched in basic and acidic residues. Over residues 260-280 (RPLTSSSAKLPKSLSSPGGPS) the composition is skewed to low complexity. At Ser-275 the chain carries Phosphoserine. Residues 296 to 324 (EQERERDPQQEQERERPVDREPVDREPVV) are compositionally biased toward basic and acidic residues. The interval 317–380 (PVDREPVVCH…LVTKAFREAQ (64 aa)) is interaction with GLUT4. One can recognise a UBX domain in the interval 386 to 462 (ERYPKVALRV…NLFPAALVHL (77 aa)). The segment at 499–536 (GSPSPLPAPDPAPKSEPAAEEGALVPPEPIPGTAQPVK) is disordered. Phosphoserine is present on residues Ser-500 and Ser-502. The segment covering 502-512 (SPLPAPDPAPK) has biased composition (pro residues).

In terms of assembly, interacts with GLUT4. Interacts with VCPKMT. Interacts with VCP. As to expression, ubiquitous. Highly expressed in testis, heart, skeletal muscle and pancreas.

It is found in the endomembrane system. The protein localises to the endoplasmic reticulum-Golgi intermediate compartment membrane. It localises to the cytoplasm. Its subcellular location is the nucleus. In terms of biological role, tethering protein that sequesters GLUT4-containing vesicles in the cytoplasm in the absence of insulin. Modulates the amount of GLUT4 that is available at the cell surface. Enhances VCP methylation catalyzed by VCPKMT. This chain is Tether containing UBX domain for GLUT4 (ASPSCR1), found in Homo sapiens (Human).